The primary structure comprises 158 residues: NAD(P)H-quinone oxidoreductase subunit N (158 aa).

The protein belongs to the complex I NdhN subunit family. As to quaternary structure, NDH-1 can be composed of about 15 different subunits; different subcomplexes with different compositions have been identified which probably have different functions.

The protein resides in the cellular thylakoid membrane. It carries out the reaction a plastoquinone + NADH + (n+1) H(+)(in) = a plastoquinol + NAD(+) + n H(+)(out). It catalyses the reaction a plastoquinone + NADPH + (n+1) H(+)(in) = a plastoquinol + NADP(+) + n H(+)(out). Functionally, NDH-1 shuttles electrons from an unknown electron donor, via FMN and iron-sulfur (Fe-S) centers, to quinones in the respiratory and/or the photosynthetic chain. The immediate electron acceptor for the enzyme in this species is believed to be plastoquinone. Couples the redox reaction to proton translocation, and thus conserves the redox energy in a proton gradient. Cyanobacterial NDH-1 also plays a role in inorganic carbon-concentration. The chain is NAD(P)H-quinone oxidoreductase subunit N from Trichodesmium erythraeum (strain IMS101).